Consider the following 172-residue polypeptide: Probable phosphatase YqeG (172 aa).

Its function is as follows. Has low dephosphorylation activity on GMP and glucose-6-phosphate. The polypeptide is Probable phosphatase YqeG (yqeG) (Bacillus subtilis (strain 168)).